We begin with the raw amino-acid sequence, 255 residues long: 5'-nucleotidase SurE (255 aa).

A divalent metal cation is bound by residues Asp-8, Asp-9, Ser-39, and Asn-91.

The protein belongs to the SurE nucleotidase family. It depends on a divalent metal cation as a cofactor.

It is found in the cytoplasm. It carries out the reaction a ribonucleoside 5'-phosphate + H2O = a ribonucleoside + phosphate. In terms of biological role, nucleotidase that shows phosphatase activity on nucleoside 5'-monophosphates. The sequence is that of 5'-nucleotidase SurE from Acinetobacter baylyi (strain ATCC 33305 / BD413 / ADP1).